The chain runs to 181 residues: Large ribosomal subunit protein eL18 (181 aa).

Belongs to the eukaryotic ribosomal protein eL18 family.

The protein localises to the cytoplasm. This Dictyostelium discoideum (Social amoeba) protein is Large ribosomal subunit protein eL18 (rpl18).